We begin with the raw amino-acid sequence, 1413 residues long: Zinc finger protein 609 (1413 aa).

Disordered stretches follow at residues 1-26 (MSLS…SGDE), 47-196 (QKLE…GRGS), 354-484 (RFCD…EPTL), 517-659 (AHAH…RPIA), and 695-765 (PNSP…AAGD). 3 positions are modified to phosphoserine: Ser358, Ser361, and Ser379. A Phosphothreonine modification is found at Thr381. Residues 386–405 (AAAASDSKGTSSSSKTRAGA) show a composition bias toward low complexity. Ser413, Ser433, Ser446, Ser452, Ser467, and Ser470 each carry phosphoserine. The segment covering 423–437 (ASSTSEDVKASPSSA) has biased composition (polar residues). Lys479 participates in a covalent cross-link: Glycyl lysine isopeptide (Lys-Gly) (interchain with G-Cter in SUMO2). The C2H2-type zinc finger occupies 495 to 520 (IDCPHPNCNKKYKHINGLKYHQAHAH). Residues 519 to 529 (AHTDDDSKPEA) are compositionally biased toward basic and acidic residues. Phosphoserine occurs at positions 533, 575, and 577. Positions 625–648 (SLERKCMEKEKCKKPSSLKSEKIP) are enriched in basic and acidic residues. The segment covering 725-735 (DKKKKDKKKKD) has biased composition (basic residues). Ser742 bears the Phosphoserine mark. The residue at position 745 (Thr745) is a Phosphothreonine. The segment covering 750-763 (CRAEEGKSPFRDAA) has biased composition (basic and acidic residues). Ser757 bears the Phosphoserine mark. Lys788 participates in a covalent cross-link: Glycyl lysine isopeptide (Lys-Gly) (interchain with G-Cter in SUMO2). The segment covering 797–843 (FTDNAPSPSIGGSSRLDSTTPTQPLTPLHVVTQNGAEASSVKTNSPA) has biased composition (polar residues). Disordered regions lie at residues 797-962 (FTDN…VIQQ), 1004-1127 (YEEQ…RQAE), 1154-1221 (IKSE…SPLT), and 1273-1369 (SKVS…STHH). A Phosphoserine modification is found at Ser803. At Thr822 the chain carries Phosphothreonine. Ser841, Ser845, and Ser848 each carry phosphoserine. The span at 854 to 875 (GEGKVDSAKSKDPEQLVKEGAK) shows a compositional bias: basic and acidic residues. Residues 902–916 (YAQSSPGTLTSSSQA) are compositionally biased toward polar residues. The span at 925-949 (TKKDEEPESVEGKVKNDVCEEKKPE) shows a compositional bias: basic and acidic residues. Residues 950–962 (LSNSSQQPSVIQQ) are compositionally biased toward polar residues. The span at 1022–1044 (GLDKKTEMGLKEREASLKEEWKQ) shows a compositional bias: basic and acidic residues. Ser1057 is modified (phosphoserine). Lys1063 is covalently cross-linked (Glycyl lysine isopeptide (Lys-Gly) (interchain with G-Cter in SUMO2)). Composition is skewed to basic and acidic residues over residues 1099–1115 (LKGK…EASE), 1154–1189 (IKSE…KEST), and 1197–1210 (PSEE…EPRP). Lys1155 is covalently cross-linked (Glycyl lysine isopeptide (Lys-Gly) (interchain with G-Cter in SUMO2)). The span at 1288 to 1298 (PSVSCKASSES) shows a compositional bias: polar residues. Lys1299 participates in a covalent cross-link: Glycyl lysine isopeptide (Lys-Gly) (interchain with G-Cter in SUMO2). Gly residues predominate over residues 1330–1348 (GCGVVGGGGSCGSVAGAGG).

As to quaternary structure, interacts (via N-terminus) with NIPBL. Interacts with the multiprotein complex Integrator. Expressed in myoblasts. Expressed in neurons in various brain regions, including striatum, prefrontal cortex, olfactory bulb, midbrain, cerebellum and hippocampus. Expressed in neural stem cells (at protein level). Expressed in thymocytes.

The protein resides in the nucleus. Its function is as follows. Transcription factor, which activates RAG1, and possibly RAG2, transcription. Through the regulation of RAG1/2 expression, may regulate thymocyte maturation. Along with NIPBL and the multiprotein complex Integrator, promotes cortical neuron migration during brain development by regulating the transcription of crucial genes in this process. Preferentially binds promoters containing paused RNA polymerase II. Up-regulates the expression of SEMA3A, NRP1, PLXND1 and GABBR2 genes, among others. Functionally, involved in regulation of myoblast proliferation during myogenesis. The chain is Zinc finger protein 609 (Znf609) from Mus musculus (Mouse).